A 662-amino-acid polypeptide reads, in one-letter code: Probable protein phosphatase 2C 4 (662 aa).

Serine 153 carries the post-translational modification Phosphoserine. The PPM-type phosphatase domain occupies 249-653; it reads DVSLENQNLQ…DDVSIVVISL (405 aa). Mn(2+) is bound by residues aspartate 286, glycine 287, aspartate 581, and aspartate 644.

Belongs to the PP2C family. Mg(2+) serves as cofactor. The cofactor is Mn(2+). As to expression, expressed in seedlings, roots, leaves, stems, young inflorescences, flowers and siliques.

The protein resides in the nucleus. The enzyme catalyses O-phospho-L-seryl-[protein] + H2O = L-seryl-[protein] + phosphate. The catalysed reaction is O-phospho-L-threonyl-[protein] + H2O = L-threonyl-[protein] + phosphate. Involved in leaf development regulation. The sequence is that of Probable protein phosphatase 2C 4 (PLL5) from Arabidopsis thaliana (Mouse-ear cress).